Consider the following 192-residue polypeptide: GTP cyclohydrolase-2 (192 aa).

Residue 47-51 (RIHSE) participates in GTP binding. Positions 52, 63, and 65 each coordinate Zn(2+). GTP contacts are provided by residues Gln68, 90–92 (EGR), and Thr112. Residue Asp124 is the Proton acceptor of the active site. The active-site Nucleophile is the Arg126. The GTP site is built by Thr147 and Lys152.

Belongs to the GTP cyclohydrolase II family. Zn(2+) is required as a cofactor.

It catalyses the reaction GTP + 4 H2O = 2,5-diamino-6-hydroxy-4-(5-phosphoribosylamino)-pyrimidine + formate + 2 phosphate + 3 H(+). It functions in the pathway cofactor biosynthesis; riboflavin biosynthesis; 5-amino-6-(D-ribitylamino)uracil from GTP: step 1/4. Its function is as follows. Catalyzes the conversion of GTP to 2,5-diamino-6-ribosylamino-4(3H)-pyrimidinone 5'-phosphate (DARP), formate and pyrophosphate. The sequence is that of GTP cyclohydrolase-2 from Picrophilus torridus (strain ATCC 700027 / DSM 9790 / JCM 10055 / NBRC 100828 / KAW 2/3).